Reading from the N-terminus, the 1412-residue chain is Sister chromatid cohesion protein PDS5 homolog B (1412 aa).

Residues 383–419 (LLVNDHLLNFVRERTLDKRWRVRKEAMMGLAQIYKKY) form an HEAT repeat. Residues 1137 to 1412 (PLSSAGKQSQ…RRRTSKRERR (276 aa)) form a disordered region. Low complexity-rich tracts occupy residues 1139–1149 (SSAGKQSQSKS) and 1156–1167 (SNASSSSNPSSP). 4 stretches are compositionally biased toward basic and acidic residues: residues 1172–1184 (GRLDSTEMDHSEN), 1196–1212 (KKTDKRDDSDLSELEKP), 1223–1241 (SEEKLSIDDLNKLGQDQKL), and 1263–1272 (QEEKRLKEDV). The span at 1322–1331 (VEEEEEEEER) shows a compositional bias: acidic residues. Residues 1350-1362 (RTQQSRAGRSKQA) are compositionally biased toward polar residues. The segment covering 1386 to 1397 (VPQEEVMEEEEV) has biased composition (acidic residues). Residues 1402 to 1412 (VRRRTSKRERR) show a composition bias toward basic residues.

Interacts with the cohesin complex.

The protein resides in the nucleus. In terms of biological role, plays a role in androgen-induced proliferative arrest. Required for maintenance of sister chromatid cohesion during mitosis. In Gallus gallus (Chicken), this protein is Sister chromatid cohesion protein PDS5 homolog B (PDS5B).